We begin with the raw amino-acid sequence, 346 residues long: Lysyl aminopeptidase (346 aa).

Zn(2+)-binding residues include H63 and D177. E207 serves as the catalytic Proton acceptor. Zn(2+)-binding residues include E208, D230, and H314.

In terms of assembly, homotetramer. Requires Zn(2+) as cofactor.

The enzyme catalyses Preferentially, release of N-terminal lysine.. In terms of biological role, hydrolyzes di-, tri- and tetrapeptides with a lysine as the N-terminal amino acid and with Gly, Lys, Ala, Phe or Glu in the second position. The sequence is that of Lysyl aminopeptidase from Pyrococcus furiosus (strain ATCC 43587 / DSM 3638 / JCM 8422 / Vc1).